Here is a 333-residue protein sequence, read N- to C-terminus: Holliday junction branch migration complex subunit RuvB (333 aa).

The interval 4 to 185 (IDRLVSTDVL…FGIVQRLEFY (182 aa)) is large ATPase domain (RuvB-L). ATP contacts are provided by residues Ile-24, Arg-25, Gly-66, Lys-69, Thr-70, Thr-71, 132 to 134 (EDY), Arg-175, Tyr-185, and Arg-222. Thr-70 is a Mg(2+) binding site. A small ATPAse domain (RuvB-S) region spans residues 186–256 (SVPDLEHIVS…IAIKALEMLN (71 aa)). Residues 259–333 (KEGLDYMDSK…HAYQHFICGG (75 aa)) form a head domain (RuvB-H) region. Positions 295, 314, and 319 each coordinate DNA.

Belongs to the RuvB family. In terms of assembly, homohexamer. Forms an RuvA(8)-RuvB(12)-Holliday junction (HJ) complex. HJ DNA is sandwiched between 2 RuvA tetramers; dsDNA enters through RuvA and exits via RuvB. An RuvB hexamer assembles on each DNA strand where it exits the tetramer. Each RuvB hexamer is contacted by two RuvA subunits (via domain III) on 2 adjacent RuvB subunits; this complex drives branch migration. In the full resolvosome a probable DNA-RuvA(4)-RuvB(12)-RuvC(2) complex forms which resolves the HJ.

The protein resides in the cytoplasm. It carries out the reaction ATP + H2O = ADP + phosphate + H(+). Its function is as follows. The RuvA-RuvB-RuvC complex processes Holliday junction (HJ) DNA during genetic recombination and DNA repair, while the RuvA-RuvB complex plays an important role in the rescue of blocked DNA replication forks via replication fork reversal (RFR). RuvA specifically binds to HJ cruciform DNA, conferring on it an open structure. The RuvB hexamer acts as an ATP-dependent pump, pulling dsDNA into and through the RuvAB complex. RuvB forms 2 homohexamers on either side of HJ DNA bound by 1 or 2 RuvA tetramers; 4 subunits per hexamer contact DNA at a time. Coordinated motions by a converter formed by DNA-disengaged RuvB subunits stimulates ATP hydrolysis and nucleotide exchange. Immobilization of the converter enables RuvB to convert the ATP-contained energy into a lever motion, pulling 2 nucleotides of DNA out of the RuvA tetramer per ATP hydrolyzed, thus driving DNA branch migration. The RuvB motors rotate together with the DNA substrate, which together with the progressing nucleotide cycle form the mechanistic basis for DNA recombination by continuous HJ branch migration. Branch migration allows RuvC to scan DNA until it finds its consensus sequence, where it cleaves and resolves cruciform DNA. The sequence is that of Holliday junction branch migration complex subunit RuvB from Hamiltonella defensa subsp. Acyrthosiphon pisum (strain 5AT).